The primary structure comprises 1465 residues: DNA polymerase III PolC-type (1465 aa).

The 157-residue stretch at Tyr-427–Leu-583 folds into the Exonuclease domain.

This sequence belongs to the DNA polymerase type-C family. PolC subfamily.

The protein localises to the cytoplasm. It catalyses the reaction DNA(n) + a 2'-deoxyribonucleoside 5'-triphosphate = DNA(n+1) + diphosphate. In terms of biological role, required for replicative DNA synthesis. This DNA polymerase also exhibits 3' to 5' exonuclease activity. The polypeptide is DNA polymerase III PolC-type (Streptococcus pyogenes serotype M1).